A 184-amino-acid chain; its full sequence is UPF0179 protein Pcal_2106 (184 aa).

Residues 146 to 161 show a composition bias toward low complexity; sequence GASSAGISQAPSRVPL. Residues 146–184 form a disordered region; sequence GASSAGISQAPSRVPLSKPPSKSPSPQKSSPRGPTSRLP.

It belongs to the UPF0179 family.

This is UPF0179 protein Pcal_2106 from Pyrobaculum calidifontis (strain DSM 21063 / JCM 11548 / VA1).